Consider the following 47-residue polypeptide: Putative glycosylation-dependent cell adhesion molecule 1 (47 aa).

The N-terminal stretch at 1-18 (MKFFMVLLPASLASTSLA) is a signal peptide.

This sequence belongs to the PP3/GlyCAM-1 family. In terms of tissue distribution, expressed in cells harvested from milk of lactating women. Not found in other tissues.

This is Putative glycosylation-dependent cell adhesion molecule 1 (GLYCAM1) from Homo sapiens (Human).